We begin with the raw amino-acid sequence, 385 residues long: MHNWLLPEHIADILPATARQLESAKAAMLERFRRYGYELVSPPLIEYTDSLLTNADPALDMQTFKLDDQLSGRQLGLRADMTPQVARIDAHLLAHRQGVTRLCYAGSVVHTRASGLMRSREPLQVGAELYGCYDLAADIEIIELMLSTLAGVGIDAVTLDLGHLGVYRALVREAQLDGETEQALFAALQAKDRASVEALTADVREPFCSAFRHLVDLYGPEAIGKARARLPGLPGIRAALDDLERLAQIFASRARISFDLTELRGTHYHTGLMFAAYAEGWAEELARGGRYDNVGRRFGRARPATGFSLDLRDMIRVLPQTHPSKGIRVRAADLSRLADEVARLRAAGEVVVVDYLGETAADLHCDRELVCREEGQSLEAAPAHP.

This sequence belongs to the class-II aminoacyl-tRNA synthetase family. HisZ subfamily. In terms of assembly, heteromultimer composed of HisG and HisZ subunits.

It localises to the cytoplasm. It participates in amino-acid biosynthesis; L-histidine biosynthesis; L-histidine from 5-phospho-alpha-D-ribose 1-diphosphate: step 1/9. Functionally, required for the first step of histidine biosynthesis. May allow the feedback regulation of ATP phosphoribosyltransferase activity by histidine. In Laribacter hongkongensis (strain HLHK9), this protein is ATP phosphoribosyltransferase regulatory subunit.